The primary structure comprises 421 residues: Synaptotagmin-12 (421 aa).

Residues 1-18 lie on the Vesicular side of the membrane; the sequence is MAVDVTEYHLSVIKSPPG. A helical membrane pass occupies residues 19 to 39; sequence WEVGVYAAGALALLGIAAVSL. Over 40–421 the chain is Cytoplasmic; the sequence is WKLWTSGSFP…VSMWHPVRRN (382 aa). Ser-97 carries the post-translational modification Phosphoserine; by PKA. A phosphoserine mark is found at Ser-99 and Ser-214. C2 domains lie at 152 to 272 and 283 to 416; these read TLGQ…SGWL and AVGE…SMWH.

It belongs to the synaptotagmin family. As to quaternary structure, homodimer. Can also form heterodimers. Interacts with SYT1. Post-translationally, phosphorylation of Ser-97 is required for mossy-fiber long-term potentiation. As to expression, expressed in the brain, specifically in neurons of the cerebellum, cortex, hippocampus, olfactory bulb, brainstem and spinal cord (at protein level).

The protein localises to the cytoplasmic vesicle. Its subcellular location is the secretory vesicle. It is found in the synaptic vesicle membrane. Synaptic vesicle phosphoprotein that enhances spontaneous neurotransmitter release but does not effect induced neurotransmitter release. Unlike other synaptotagmins, it does not bind Ca(2+) or phospholipids. Essential for mossy-fiber long-term potentiation in the hippocampus. The polypeptide is Synaptotagmin-12 (Rattus norvegicus (Rat)).